A 549-amino-acid chain; its full sequence is Undecaprenyl phosphate-alpha-4-amino-4-deoxy-L-arabinose arabinosyl transferase 2 (549 aa).

12 helical membrane-spanning segments follow: residues Leu-9 to Ile-29, Leu-80 to Ala-102, Ser-112 to Ala-132, Asn-133 to Leu-153, Phe-176 to Leu-196, Leu-204 to Leu-224, Phe-259 to Phe-279, Gly-290 to Gly-310, Leu-312 to Ala-332, Ala-342 to Val-362, Ser-377 to Phe-397, and Cys-402 to Pro-422.

This sequence belongs to the glycosyltransferase 83 family.

The protein resides in the cell inner membrane. The catalysed reaction is 4-amino-4-deoxy-alpha-L-arabinopyranosyl di-trans,octa-cis-undecaprenyl phosphate + lipid IVA = lipid IIA + di-trans,octa-cis-undecaprenyl phosphate.. It participates in lipopolysaccharide metabolism; 4-amino-4-deoxy-beta-L-arabinose-lipid A biosynthesis. Functionally, catalyzes the transfer of the L-Ara4N moiety of the glycolipid undecaprenyl phosphate-alpha-L-Ara4N to lipid A. The modified arabinose is attached to lipid A and is required for resistance to polymyxin and cationic antimicrobial peptides. The chain is Undecaprenyl phosphate-alpha-4-amino-4-deoxy-L-arabinose arabinosyl transferase 2 from Pseudomonas fluorescens (strain Pf0-1).